Consider the following 386-residue polypeptide: ATP synthase gamma chain 2, chloroplastic (386 aa).

Residues 1-22 (MTGSISTSWLLSSPSNSNSASS) form a disordered region. A chloroplast-targeting transit peptide spans 1–60 (MTGSISTSWLLSSPSNSNSASSSESYSFIATLKPVRYYPFQSLTPNRISSRSPLPSIQIR). Cysteine 149 is a catalytic residue. The cysteines at positions 260 and 266 are disulfide-linked.

Belongs to the ATPase gamma chain family. As to quaternary structure, F-type ATPases have 2 components, CF(1) - the catalytic core - and CF(0) - the membrane proton channel. CF(1) has five subunits: alpha(3), beta(3), gamma(1), delta(1), epsilon(1). CF(0) has four main subunits: a, b, b' and c.

The protein localises to the plastid. Its subcellular location is the chloroplast thylakoid membrane. Produces ATP from ADP in the presence of a proton gradient across the membrane. The gamma chain is believed to be important in regulating ATPase activity and the flow of protons through the CF(0) complex. The protein is ATP synthase gamma chain 2, chloroplastic (ATPC2) of Arabidopsis thaliana (Mouse-ear cress).